The following is a 616-amino-acid chain: UvrABC system protein C (616 aa).

Residues 12 to 91 (ESPGVYLWKD…IKEYHPRFNI (80 aa)) enclose the GIY-YIG domain. The UVR domain maps to 202-237 (SDVMHHVRERMLDASERLDFERAAELRDALAHLEKM).

This sequence belongs to the UvrC family. In terms of assembly, interacts with UvrB in an incision complex.

It localises to the cytoplasm. The UvrABC repair system catalyzes the recognition and processing of DNA lesions. UvrC both incises the 5' and 3' sides of the lesion. The N-terminal half is responsible for the 3' incision and the C-terminal half is responsible for the 5' incision. The sequence is that of UvrABC system protein C from Gemmatimonas aurantiaca (strain DSM 14586 / JCM 11422 / NBRC 100505 / T-27).